Here is a 444-residue protein sequence, read N- to C-terminus: Type VI secretion system baseplate component TssK1 (444 aa).

Forms transient higher-order structures that correlated with dynamics of sheath component TssB1. Interacts with TssA1.

Its function is as follows. Core component of the H1 type VI (H1-T6SS) secretion system that plays a role in the release of toxins targeting both eukaryotic and prokaryotic species. Functions as a spatio-temporal marker for assembly of contractile apparatus made of TssB1 and TssC1. This role in assembly depends on TssM1. This Pseudomonas aeruginosa (strain ATCC 15692 / DSM 22644 / CIP 104116 / JCM 14847 / LMG 12228 / 1C / PRS 101 / PAO1) protein is Type VI secretion system baseplate component TssK1.